The chain runs to 235 residues: tRNA (guanine-N(1)-)-methyltransferase (235 aa).

Residues glycine 114 and 134 to 139 each bind S-adenosyl-L-methionine; that span reads VGDYIL.

Belongs to the RNA methyltransferase TrmD family. In terms of assembly, homodimer.

The protein resides in the cytoplasm. The catalysed reaction is guanosine(37) in tRNA + S-adenosyl-L-methionine = N(1)-methylguanosine(37) in tRNA + S-adenosyl-L-homocysteine + H(+). Functionally, specifically methylates guanosine-37 in various tRNAs. In Chelativorans sp. (strain BNC1), this protein is tRNA (guanine-N(1)-)-methyltransferase.